The primary structure comprises 482 residues: Uric acid transporter UacT (482 aa).

The Cytoplasmic segment spans residues 1-29; sequence MSAIDSQLPSSSGQDRPTDEVDRILSPGK. A helical transmembrane segment spans residues 30-50; it reads LIILGLQHVLVMYAGAVAVPL. The Periplasmic segment spans residues 51 to 62; it reads MIGDRLGLSKEA. The chain crosses the membrane as a helical span at residues 63–83; sequence IAMLISSDLFCCGIVTLLQCI. The Cytoplasmic segment spans residues 84 to 92; the sequence is GIGRFMGIR. Residues 93-113 form a helical membrane-spanning segment; the sequence is LPVIMSVTFAAVTPMIAIGMN. Residues 114–115 are Periplasmic-facing; that stretch reads PD. Residues 116–136 form a helical membrane-spanning segment; it reads IGLLGIFGATIAAGFITTLLA. Residues 137-142 are Cytoplasmic-facing; that stretch reads PLIGRL. A helical transmembrane segment spans residues 143 to 163; it reads MPLFPPLVTGVVITSIGLSII. Residues 164–178 are Periplasmic-facing; it reads QVGIDWAAGGKGNPQ. The helical transmembrane segment at 179–199 threads the bilayer; it reads YGNPVYLGISFAVLIFILLIT. Over 200–204 the chain is Cytoplasmic; the sequence is RYAKG. A helical transmembrane segment spans residues 205 to 225; that stretch reads FMSNVAVLLGIVFGFLLSWMM. At 226-261 the chain is on the periplasmic side; sequence NEVNLSGLHDASWFAIVTPMSFGMPIFDPVSILTMT. The helical transmembrane segment at 262–282 threads the bilayer; it reads AVLIIVFIESMGMFLALGEIV. Residues 283–337 are Cytoplasmic-facing; that stretch reads GRKLSSHDIIRGLRVDGVGTMIGGTFNSFPHTSFSQNVGLVSVTRVHSRWVCISS. A helical membrane pass occupies residues 338–358; that stretch reads GIILILFGMVPKMAVLVASIP. Position 359 (Gln-359) is a topological domain, periplasmic. Residues 360 to 380 traverse the membrane as a helical segment; sequence FVLGGAGLVMFGMVLATGIRI. The Cytoplasmic segment spans residues 381–392; it reads LSRCNYTTNRYN. A helical transmembrane segment spans residues 393 to 413; sequence LYIVAISLGVGMTPTLSHDFF. Residues 414–421 lie on the Periplasmic side of the membrane; sequence SKLPAVLQ. Residues 422–442 form a helical membrane-spanning segment; the sequence is PLLHSGIMLATLSAVVLNVFF. At 443 to 482 the chain is on the cytoplasmic side; that stretch reads NGYQHHADLVKESVSDKDLKVRTVRMWLLMRKLKKNEHGE.

The protein belongs to the nucleobase:cation symporter-2 (NCS2) (TC 2.A.40) family.

Its subcellular location is the cell inner membrane. Inhibited in the presence of the protonophore carbonyl cyanide m-chlorophenyl hydrazone. In terms of biological role, proton-dependent high-capacity transporter for uric acid. Also shows a low capacity for transport of xanthine at 37 degrees Celsius but not at 25 degrees Celsius. This Escherichia coli (strain K12) protein is Uric acid transporter UacT (uacT).